Here is a 1935-residue protein sequence, read N- to C-terminus: Myosin heavy chain, fast skeletal muscle (1935 aa).

Positions 32 to 81 constitute a Myosin N-terminal SH3-like domain; it reads DAKTAFFVVDPDEMYLKGTLVSKEGGKATVKTHSGKTVTVKEDEIFPMNP. Residues 85 to 779 form the Myosin motor domain; that stretch reads DKIEDMAMMT…LLGALEEMRD (695 aa). An N6,N6,N6-trimethyllysine modification is found at lysine 129. 178–185 provides a ligand contact to ATP; that stretch reads GESGAGKT. Actin-binding stretches follow at residues 659–681 and 761–775; these read LMTN…ESKT and HTKV…GALE. Residues 782 to 811 form the IQ domain; it reads LALLVTMTQALCRGYVMRKEFVKMMERRES. The segment at 812–839 is hinge; the sequence is IYSIQYNIRSFMNVKHWPWMKLYFKIKP. Residues 840–1935 are a coiled coil; it reads LLKSAETEKE…RDAGKSKDEE (1096 aa). 2 disordered regions span residues 1589–1608 and 1902–1935; these read RNSQ…EVRS and HELE…KDEE. Positions 1592-1603 are enriched in polar residues; sequence QRVIDSMQSTLD. Composition is skewed to basic and acidic residues over residues 1902–1913 and 1924–1935; these read HELEEAQERADV and KSRDAGKSKDEE.

The protein belongs to the TRAFAC class myosin-kinesin ATPase superfamily. Myosin family. In terms of assembly, muscle myosin is a hexameric protein that consists of 2 heavy chain subunits (MHC), 2 alkali light chain subunits (MLC) and 2 regulatory light chain subunits (MLC-2).

The protein localises to the cytoplasm. The protein resides in the myofibril. Functionally, muscle contraction. This chain is Myosin heavy chain, fast skeletal muscle, found in Cyprinus carpio (Common carp).